The chain runs to 80 residues: Metallothionein-like protein 2B (80 aa).

The protein belongs to the metallothionein superfamily. Type 15 family. In terms of tissue distribution, highly expressed in stems. Expressed in leaves and rachis.

Metallothioneins have a high content of cysteine residues that bind various heavy metals. This Oryza sativa subsp. japonica (Rice) protein is Metallothionein-like protein 2B (MT2B).